Reading from the N-terminus, the 357-residue chain is tRNA N6-adenosine threonylcarbamoyltransferase (357 aa).

Positions 115 and 119 each coordinate Fe cation. Residues 137–141 (LASGG), D170, G183, and N281 each bind substrate. Residue D309 coordinates Fe cation.

It belongs to the KAE1 / TsaD family. It depends on Fe(2+) as a cofactor.

The protein resides in the cytoplasm. The enzyme catalyses L-threonylcarbamoyladenylate + adenosine(37) in tRNA = N(6)-L-threonylcarbamoyladenosine(37) in tRNA + AMP + H(+). Functionally, required for the formation of a threonylcarbamoyl group on adenosine at position 37 (t(6)A37) in tRNAs that read codons beginning with adenine. Is involved in the transfer of the threonylcarbamoyl moiety of threonylcarbamoyl-AMP (TC-AMP) to the N6 group of A37, together with TsaE and TsaB. TsaD likely plays a direct catalytic role in this reaction. This is tRNA N6-adenosine threonylcarbamoyltransferase from Nitrobacter hamburgensis (strain DSM 10229 / NCIMB 13809 / X14).